Consider the following 791-residue polypeptide: Calcium-transporting ATPase CtpE (791 aa).

The next 3 membrane-spanning stretches (helical) occupy residues 53–73, 213–233, and 252–272; these read LFVI…LLII, ILQF…YTQL, and VPMV…VGVV. The active-site 4-aspartylphosphate intermediate is the Asp299. Mg(2+) contacts are provided by Asp299, Thr301, and Asp530. A run of 6 helical transmembrane segments spans residues 596–616, 627–647, 664–684, 697–717, 725–745, and 757–777; these read VYSV…KIFG, IHVT…LSLA, AALP…LVAY, ASTA…AVVA, VLLV…PLAQ, and VTSV…VLWW.

It belongs to the cation transport ATPase (P-type) (TC 3.A.3) family.

The protein resides in the cell membrane. It catalyses the reaction Ca(2+)(in) + ATP + H2O = Ca(2+)(out) + ADP + phosphate + H(+). Its function is as follows. P-type ATPase involved in specific uptake of calcium. Essential for growth and maintenance of cell surface integrity under Ca(2+)-deficient conditions. This chain is Calcium-transporting ATPase CtpE, found in Mycolicibacterium smegmatis (strain ATCC 700084 / mc(2)155) (Mycobacterium smegmatis).